Consider the following 263-residue polypeptide: Tryptophan 2,3-dioxygenase (263 aa).

Substrate is bound by residues 32 to 36, Y94, and R98; that span reads FIVIH. Heme is bound at residue H221. T235 is a substrate binding site.

Belongs to the tryptophan 2,3-dioxygenase family. Homotetramer. Heme serves as cofactor.

The enzyme catalyses L-tryptophan + O2 = N-formyl-L-kynurenine. It participates in amino-acid degradation; L-tryptophan degradation via kynurenine pathway; L-kynurenine from L-tryptophan: step 1/2. Heme-dependent dioxygenase that catalyzes the oxidative cleavage of the L-tryptophan (L-Trp) pyrrole ring and converts L-tryptophan to N-formyl-L-kynurenine. Catalyzes the oxidative cleavage of the indole moiety. This chain is Tryptophan 2,3-dioxygenase, found in Caulobacter vibrioides (strain ATCC 19089 / CIP 103742 / CB 15) (Caulobacter crescentus).